Reading from the N-terminus, the 269-residue chain is BAG family molecular chaperone regulator 4 (269 aa).

A disordered region spans residues 1–40; the sequence is MMHNSTEESEWEVRPGGMLVQRRDDAASSDHKPLQDPDSA. Positions 21-35 are enriched in basic and acidic residues; it reads QRRDDAASSDHKPLQ. Residues 46–122 enclose the Ubiquitin-like domain; sequence QTIRITVSHG…LVVVVEDTNK (77 aa). The BAG domain maps to 138–219; it reads AIAAVNAVTG…NLQEAVDKLK (82 aa). The disordered stretch occupies residues 241-269; it reads SFGNGVGSLNPPPPASPSANVTQDWEKFD.

In terms of assembly, binds to the ATPase domain of HSP70/HSC70 chaperones. Interacts with HSP70-1. As to expression, detected in stems, leaves, flowers and roots.

Functionally, co-chaperone that regulates diverse cellular pathways, such as programmed cell death and stress responses. This Arabidopsis thaliana (Mouse-ear cress) protein is BAG family molecular chaperone regulator 4 (BAG4).